A 359-amino-acid chain; its full sequence is MSTKVVNVAVIGAGVVGSAFLDQLLAMKSTITYNLVLLAEAERSLISKDFSPLNVGSDWKAALAASTTKTLPLDDLIAHLKTSPKPVILVDNTSSAYIAGFYTKFVENGISIATPNKKAFSSDLATWKALFSNKPTNGFVYHEATVGAGLPIISFLREIIQTGDEVEKIEGIFSGTLSYIFNEFSTSQANDVKFSDVVKVAKKLGYTEPDPRDDLNGLDVARKVTIVGRISGVEVESPTSFPVQSLIPKPLESVKSADEFLEKLSDYDKDLTQLKKEAATENKVLRFIGKVDVATKSVSVGIEKYDYSHPFASLKGSDNVISIKTKRYTNPVVIQGAGAGAAVTAAGVLGDVIKIAQRL.

The NAD(+) site is built by alanine 13, valine 15, valine 16, and alanine 41. Position 16 (valine 16) interacts with NADP(+). Valine 16 contacts NADPH. Residues lysine 60, threonine 93, serine 94, and lysine 117 each contribute to the NADPH site. Position 93 (threonine 93) interacts with NAD(+). Threonine 93 contributes to the NADP(+) binding site. Lysine 117 is an NADP(+) binding site. Glutamate 143, valine 146, alanine 148, and leucine 150 together coordinate Na(+). 2 residues coordinate NADP(+): glycine 205 and glutamate 208. L-homoserine-binding residues include glutamate 208 and aspartate 219. Lysine 223 serves as the catalytic Proton donor. A Glycyl lysine isopeptide (Lys-Gly) (interchain with G-Cter in ubiquitin) cross-link involves residue lysine 290. Glycine 340 is an NAD(+) binding site. Position 340 (glycine 340) interacts with NADP(+). Glycine 340 serves as a coordination point for NADPH.

Belongs to the homoserine dehydrogenase family. As to quaternary structure, homodimer. A metal cation is required as a cofactor.

It carries out the reaction L-homoserine + NADP(+) = L-aspartate 4-semialdehyde + NADPH + H(+). The catalysed reaction is L-homoserine + NAD(+) = L-aspartate 4-semialdehyde + NADH + H(+). The protein operates within amino-acid biosynthesis; L-methionine biosynthesis via de novo pathway; L-homoserine from L-aspartate: step 3/3. It participates in amino-acid biosynthesis; L-threonine biosynthesis; L-threonine from L-aspartate: step 3/5. Functionally, catalyzes the conversion of L-aspartate-beta-semialdehyde (L-Asa) to L-homoserine (L-Hse), the third step in the biosynthesis of amino acids that derive from aspartate (the aspartate family of amino acids), including methioinine and threonine, the latter of which is a precursor to isoleucine; production of homoserine leads to a branch-point in the pathway as it can either be O-phosphorylated for processing to threonine, or O-acylated for processing to methionine. The sequence is that of Homoserine dehydrogenase (HOM6) from Saccharomyces cerevisiae (strain ATCC 204508 / S288c) (Baker's yeast).